The sequence spans 228 residues: Protein TIFY 10a (228 aa).

Residues 75–110 form the Tify domain; that stretch reads REQEKRQLTIFYGGKVLVFDDFPAEKAKDLMQMASK. Positions 164–189 match the Jas motif; it reads PQARKASLHRFLEKRKDRLQAKAPYQ. The Nuclear localization signal motif lies at 166-173; that stretch reads ARKASLHR. Positions 175-228 are disordered; it reads LEKRKDRLQAKAPYQGSPSDASPVKKELQESQPWLGLGPQVAAPDLSLRQESSQ.

Belongs to the TIFY/JAZ family. In terms of assembly, interacts with COI1A and COI1B in a coronatine-dependent manner. Coronatine is an analog of jasmonoyl isoleucine (JA-Ile). Post-translationally, ubiquitinated. Targeted for degradation by the SCF(COI1) E3 ubiquitin ligase-proteasome pathway during jasmonate signaling.

The protein localises to the nucleus. Repressor of jasmonate responses. This chain is Protein TIFY 10a, found in Oryza sativa subsp. japonica (Rice).